The chain runs to 155 residues: Small ribosomal subunit protein uS7 (155 aa).

It belongs to the universal ribosomal protein uS7 family. In terms of assembly, part of the 30S ribosomal subunit. Contacts proteins S9 and S11.

Its function is as follows. One of the primary rRNA binding proteins, it binds directly to 16S rRNA where it nucleates assembly of the head domain of the 30S subunit. Is located at the subunit interface close to the decoding center, probably blocks exit of the E-site tRNA. In Chloroherpeton thalassium (strain ATCC 35110 / GB-78), this protein is Small ribosomal subunit protein uS7.